Here is a 354-residue protein sequence, read N- to C-terminus: Neutral protease 2 homolog SNOG_02177 (354 aa).

The signal sequence occupies residues 1–19 (MKFQILSVAALASLASAVS). Residues 20 to 182 (DALDKRDSPL…WIDLAKRTIV (163 aa)) constitute a propeptide that is removed on maturation. 2 disulfide bridges follow: Cys-186/Cys-257 and Cys-264/Cys-282. Asn-214 carries N-linked (GlcNAc...) asparagine glycosylation. His-306 lines the Zn(2+) pocket. Glu-307 is an active-site residue. A Zn(2+)-binding site is contributed by His-310.

This sequence belongs to the peptidase M35 family. The cofactor is Zn(2+).

It localises to the secreted. The enzyme catalyses Preferential cleavage of bonds with hydrophobic residues in P1'. Also 3-Asn-|-Gln-4 and 8-Gly-|-Ser-9 bonds in insulin B chain.. In terms of biological role, secreted metalloproteinase that allows assimilation of proteinaceous substrates. Shows high activities on basic nuclear substrates such as histone and protamine. This is Neutral protease 2 homolog SNOG_02177 from Phaeosphaeria nodorum (strain SN15 / ATCC MYA-4574 / FGSC 10173) (Glume blotch fungus).